Consider the following 205-residue polypeptide: Molybdenum cofactor guanylyltransferase (205 aa).

GTP contacts are provided by residues 14–16 (LAG), Lys27, Asp77, and Asp107. Asp107 contacts Mg(2+).

This sequence belongs to the MobA family. In terms of assembly, monomer. Mg(2+) is required as a cofactor.

Its subcellular location is the cytoplasm. It carries out the reaction Mo-molybdopterin + GTP + H(+) = Mo-molybdopterin guanine dinucleotide + diphosphate. In terms of biological role, transfers a GMP moiety from GTP to Mo-molybdopterin (Mo-MPT) cofactor (Moco or molybdenum cofactor) to form Mo-molybdopterin guanine dinucleotide (Mo-MGD) cofactor. This is Molybdenum cofactor guanylyltransferase from Burkholderia ambifaria (strain ATCC BAA-244 / DSM 16087 / CCUG 44356 / LMG 19182 / AMMD) (Burkholderia cepacia (strain AMMD)).